The chain runs to 605 residues: MSLNFLKRYLSRSTRNFQHVFEDQHGLLSIRNPEIDVPITTIDDNLDERNINGPQSDQEIVNRLIQSMVISKNEETRPMLKNEQLMNIYKHWNLYHKNDLPFINPTKYTPFEFQSIENDDISYINNPRLSVTKLLISGWCELRELYRVFAGSVRTPPTKAMSAGTKLHLKLEQALHGVIDLEDIENFIRSNTEEIMEMYDLVDNDGIFDMNPDDSIAIDWSETIIERLYSLIVCSESREVILHGYLNLQKESFVENEQEIKNPSSVLVSGIVDQIQFENPENSDDFALFDEVQKYLDVEYEQVDETPLVDLSRFFDDVKNIIQCYPEFQLKFTDLKTRMVYQIPSQKSVLDSAKFQTFYYRYFFELLSKDANFAYRCLLENAKRRGLDVDKPLSVLTTFRILRRHYHLFYNDFLKLADGKPIGFAPFDSERIDSDYEFGKLFVLGKDFAQHQEQASQHLKFIESLGGYDSLEYDKLLLPLLKTWKTPPTLRYLAARSAQFYEIFGSRLGDTTTVEYRNTFTGKIIDTKVYNYNNGELETETIHASDFWNGKLDPEPTNDFSRCQYCEFKSKCAIPKIGKISDSHASIGPEVRKFLNDVKHLQKDC.

The transit peptide at 1 to 17 (MSLNFLKRYLSRSTRNF) directs the protein to the mitochondrion. [4Fe-4S] cluster is bound by residues C140, C563, C566, and C572.

This sequence belongs to the EXO5 family. As to quaternary structure, monomer. Requires Mg(2+) as cofactor. [4Fe-4S] cluster is required as a cofactor.

The protein resides in the mitochondrion. In terms of biological role, single strand DNA specific 5' exonuclease involved in mitochondrial DNA replication and recombination. Releases dinucleotides as main products of catalysis. Has the capacity to slide across 5'double-stranded DNA or 5'RNA sequences and resumes cutting two nucleotides downstream of the double-stranded-to-single-stranded junction or RNA-to-DNA junction, respectively. The protein is Exonuclease V, mitochondrial (EXO5) of Candida tropicalis (strain ATCC MYA-3404 / T1) (Yeast).